The sequence spans 618 residues: Phostensin (618 aa).

Positions Arg15–Leu33 are enriched in basic and acidic residues. Residues Arg15–Gly505 form a disordered region. Ser54 carries the phosphoserine modification. Over residues Gln96–Gln109 the composition is skewed to low complexity. 2 stretches are compositionally biased toward basic and acidic residues: residues Arg110–Leu160 and Leu173–Lys197. Phosphoserine occurs at positions 131, 139, 181, and 201. Phosphothreonine is present on Thr205. At Ser231 the chain carries Phosphoserine. Composition is skewed to basic and acidic residues over residues Asp234–Ala245 and Ser271–Thr289. Positions Glu308 to Ala319 are enriched in low complexity. Over residues Lys348–Glu358 the composition is skewed to basic and acidic residues. Residues Arg429 to Asp451 show a composition bias toward pro residues. Ser437 carries the phosphoserine modification. Position 462 is an N6-acetyllysine (Lys462). The segment covering Ala485–Gly505 has biased composition (low complexity). Position 535 is a phosphoserine (Ser535). Positions Tyr556–Leu594 are disordered. Over residues Pro572–Ala583 the composition is skewed to pro residues. Positions Pro585 to Leu594 are enriched in acidic residues.

In terms of assembly, interacts with Protein phosphatase 1 (PP1).

The protein resides in the cytoplasm. It is found in the cytoskeleton. In terms of biological role, may target protein phosphatase 1 to F-actin cytoskeleton. The polypeptide is Phostensin (PPP1R18) (Sus scrofa (Pig)).